The chain runs to 784 residues: Ubiquitin carboxyl-terminal hydrolase 1 (784 aa).

Disordered stretches follow at residues 1 to 21 (MPGV…SKKN) and 33 to 54 (TKRA…EYRG). Over residues 7–16 (SESNGLSRGS) the composition is skewed to polar residues. Phosphoserine occurs at positions 16, 42, and 67. Residues 81-784 (VGLNNLGNTC…TPYLLFYKKL (704 aa)) form the USP domain. The active-site Nucleophile is the cysteine 90. Basic and acidic residues-rich tracts occupy residues 232 to 243 (KVEEKSLQKEET) and 252 to 264 (DSTR…KEQL). 2 disordered regions span residues 232–341 (KVEE…KINW) and 363–411 (TNQR…SSEA). Over residues 389-407 (NTVNGSGPASPGSSVTPVD) the composition is skewed to polar residues. A Phosphoserine modification is found at serine 475. Histidine 593 acts as the Proton acceptor in catalysis. The interval 686–723 (PEKVVGTPFTDSRNSETNDTNGTQESDRSKESSDQTGI) is disordered. The segment covering 694-709 (FTDSRNSETNDTNGTQ) has biased composition (polar residues). Phosphoserine is present on serine 767.

The protein belongs to the peptidase C19 family. Interacts with FANCD2 and PCNA. Interacts with WDR48. Interacts with ATAD5; the interaction regulates USP1-mediated PCNA deubiquitination. In terms of processing, autocatalytic cleavage of USP1 following UV irradiation inactivates it, leading to an increase in ubiquitinated PCNA, recruitment of POLH and translesion synthesis. Ubiquitinated by the CRL2(KLHDC2) complex following autocatalytic cleavage, leading to its degradation: the CRL2(KLHDC2) complex recognizes the diglycine (Gly-Gly) at the C-terminus.

The protein localises to the nucleus. The catalysed reaction is Thiol-dependent hydrolysis of ester, thioester, amide, peptide and isopeptide bonds formed by the C-terminal Gly of ubiquitin (a 76-residue protein attached to proteins as an intracellular targeting signal).. In terms of biological role, negative regulator of DNA damage repair which specifically deubiquitinates monoubiquitinated FANCD2. Also involved in PCNA-mediated translesion synthesis (TLS) by deubiquitinating monoubiquitinated PCNA. Has almost no deubiquitinating activity by itself and requires the interaction with WDR48 to have a high activity. This is Ubiquitin carboxyl-terminal hydrolase 1 from Rattus norvegicus (Rat).